The primary structure comprises 333 residues: Flagellar P-ring protein (333 aa).

The N-terminal stretch at 1–22 is a signal peptide; that stretch reads MRRNILSMFLFITLIIYSSIFA.

This sequence belongs to the FlgI family. As to quaternary structure, the basal body constitutes a major portion of the flagellar organelle and consists of four rings (L,P,S, and M) mounted on a central rod.

Its subcellular location is the periplasm. The protein localises to the bacterial flagellum basal body. Its function is as follows. Assembles around the rod to form the L-ring and probably protects the motor/basal body from shearing forces during rotation. The chain is Flagellar P-ring protein from Fervidobacterium nodosum (strain ATCC 35602 / DSM 5306 / Rt17-B1).